We begin with the raw amino-acid sequence, 576 residues long: Sulfite reductase [NADPH] hemoprotein beta-component (576 aa).

The segment covering 1-12 has biased composition (basic and acidic residues); sequence MNVKTEPDRSRD. A disordered region spans residues 1–25; the sequence is MNVKTEPDRSRDVSQPLDKLGPDET. Residues Cys441, Cys447, Cys486, and Cys490 each coordinate [4Fe-4S] cluster. A siroheme-binding site is contributed by Cys490.

It belongs to the nitrite and sulfite reductase 4Fe-4S domain family. As to quaternary structure, alpha(8)-beta(8). The alpha component is a flavoprotein, the beta component is a hemoprotein. The cofactor is siroheme. It depends on [4Fe-4S] cluster as a cofactor.

The catalysed reaction is hydrogen sulfide + 3 NADP(+) + 3 H2O = sulfite + 3 NADPH + 4 H(+). The protein operates within sulfur metabolism; hydrogen sulfide biosynthesis; hydrogen sulfide from sulfite (NADPH route): step 1/1. Component of the sulfite reductase complex that catalyzes the 6-electron reduction of sulfite to sulfide. This is one of several activities required for the biosynthesis of L-cysteine from sulfate. This is Sulfite reductase [NADPH] hemoprotein beta-component from Nitrobacter hamburgensis (strain DSM 10229 / NCIMB 13809 / X14).